The primary structure comprises 332 residues: Formamidase (332 aa).

The CN hydrolase domain occupies 14-259; it reads FLTALIQYPV…WEIVTAEVYP (246 aa). The Proton acceptor role is filled by glutamate 60. Lysine 132 acts as the Proton donor in catalysis. Cysteine 165 functions as the Nucleophile in the catalytic mechanism.

The protein belongs to the carbon-nitrogen hydrolase superfamily. Aliphatic amidase family.

It carries out the reaction formamide + H2O = formate + NH4(+). Functionally, is an aliphatic amidase with a restricted substrate specificity, as it only hydrolyzes formamide. The protein is Formamidase of Bacillus thuringiensis (strain Al Hakam).